The chain runs to 370 residues: Flagellar P-ring protein (370 aa).

Residues 1 to 21 (MKLLLFILMISSIIIVPVGQA) form the signal peptide.

The protein belongs to the FlgI family. As to quaternary structure, the basal body constitutes a major portion of the flagellar organelle and consists of four rings (L,P,S, and M) mounted on a central rod.

The protein localises to the periplasm. It localises to the bacterial flagellum basal body. In terms of biological role, assembles around the rod to form the L-ring and probably protects the motor/basal body from shearing forces during rotation. The protein is Flagellar P-ring protein of Pseudoalteromonas atlantica (strain T6c / ATCC BAA-1087).